A 489-amino-acid polypeptide reads, in one-letter code: WD repeat-containing protein JIP5 (489 aa).

The WD 1 repeat unit spans residues 4–45 (PLSSDALDLCFHPAAETNLLAVGLISGKIQLINYDDYLSSPS). Residues 46 to 66 (SSRTPLAPPSKKSKPSTISSA) are disordered. One copy of the WD 2 repeat lies at 124–163 (EVHDAAPSRVLPVDESLVVTGDDDGVVRLWDVRKGGGKGI). Residues 192 to 246 (SIKEAKKSKTQLKKQRRRARQAERLKEHDKEKREQNASDTEASEPDSEDDAAIKV) form a disordered region. A compositionally biased stretch (basic residues) spans 199-210 (SKTQLKKQRRRA). The segment covering 211-227 (RQAERLKEHDKEKREQN) has biased composition (basic and acidic residues). The span at 232–241 (EASEPDSEDD) shows a compositional bias: acidic residues. WD repeat units follow at residues 279–318 (DQEDELLSITSIRSSTKLVVGTQLGILSLWTPSRGLLDHV) and 323–363 (GHPA…GVIA). The segment at 417-489 (IVGLAEDDSD…AGKGGFFSDL (73 aa)) is disordered. Composition is skewed to acidic residues over residues 421 to 440 (AEDDSDDDDDDDDDDDDDDD) and 449 to 472 (DGAEQTDGDAESGQDDEQDPDSED).

It belongs to the WD repeat WDR55 family.

It localises to the nucleus. The protein localises to the nucleolus. The protein is WD repeat-containing protein JIP5 (JIP5) of Mycosarcoma maydis (Corn smut fungus).